We begin with the raw amino-acid sequence, 485 residues long: NADH-quinone oxidoreductase subunit N (485 aa).

14 helical membrane-spanning segments follow: residues 8–28, 35–55, 71–91, 105–125, 127–147, 159–179, 203–223, 235–255, 271–291, 297–317, 326–346, 373–393, 408–430, and 455–475; these read LIAL…MLSI, FLNA…LWFV, GFAM…CTFA, FYLL…ANHL, SLFL…GYAF, YTIL…LVYA, LLAG…LVPF, PAPV…GVVM, VVLA…ALSQ, LLGY…IALQ, VGGY…VVSL, AAVM…LGFI, WWLV…RVAV, and IVVL…QPLI.

This sequence belongs to the complex I subunit 2 family. In terms of assembly, NDH-1 is composed of 13 different subunits. Subunits NuoA, H, J, K, L, M, N constitute the membrane sector of the complex.

It is found in the cell inner membrane. It catalyses the reaction a quinone + NADH + 5 H(+)(in) = a quinol + NAD(+) + 4 H(+)(out). Functionally, NDH-1 shuttles electrons from NADH, via FMN and iron-sulfur (Fe-S) centers, to quinones in the respiratory chain. The immediate electron acceptor for the enzyme in this species is believed to be ubiquinone. Couples the redox reaction to proton translocation (for every two electrons transferred, four hydrogen ions are translocated across the cytoplasmic membrane), and thus conserves the redox energy in a proton gradient. The polypeptide is NADH-quinone oxidoreductase subunit N (Shigella boydii serotype 18 (strain CDC 3083-94 / BS512)).